The primary structure comprises 207 residues: 3-isopropylmalate dehydratase small subunit (207 aa).

It belongs to the LeuD family. LeuD type 1 subfamily. Heterodimer of LeuC and LeuD.

The enzyme catalyses (2R,3S)-3-isopropylmalate = (2S)-2-isopropylmalate. The protein operates within amino-acid biosynthesis; L-leucine biosynthesis; L-leucine from 3-methyl-2-oxobutanoate: step 2/4. Its function is as follows. Catalyzes the isomerization between 2-isopropylmalate and 3-isopropylmalate, via the formation of 2-isopropylmaleate. The polypeptide is 3-isopropylmalate dehydratase small subunit (Acidithiobacillus ferrooxidans (strain ATCC 23270 / DSM 14882 / CIP 104768 / NCIMB 8455) (Ferrobacillus ferrooxidans (strain ATCC 23270))).